A 524-amino-acid chain; its full sequence is Glucose-6-phosphate isomerase (524 aa).

The Proton donor role is filled by Glu-346. Residues His-377 and Lys-492 contribute to the active site.

The protein belongs to the GPI family.

Its subcellular location is the cytoplasm. It carries out the reaction alpha-D-glucose 6-phosphate = beta-D-fructose 6-phosphate. It functions in the pathway carbohydrate biosynthesis; gluconeogenesis. It participates in carbohydrate degradation; glycolysis; D-glyceraldehyde 3-phosphate and glycerone phosphate from D-glucose: step 2/4. Functionally, catalyzes the reversible isomerization of glucose-6-phosphate to fructose-6-phosphate. The polypeptide is Glucose-6-phosphate isomerase (Chlamydia trachomatis serovar A (strain ATCC VR-571B / DSM 19440 / HAR-13)).